A 300-amino-acid chain; its full sequence is Dihydroorotate dehydrogenase B (NAD(+)), catalytic subunit (300 aa).

FMN-binding positions include Ser-20 and 44-45; that span reads KS. Residues Lys-44, 68–72, and Asn-122 each bind substrate; that span reads NAMGL. Residue Asn-122 coordinates FMN. Cys-125 acts as the Nucleophile in catalysis. FMN contacts are provided by Lys-160 and Ile-186. 187–188 is a binding site for substrate; that stretch reads NT. FMN-binding positions include Gly-212, 238 to 239, and 260 to 261; these read GG and GT.

The protein belongs to the dihydroorotate dehydrogenase family. Type 1 subfamily. As to quaternary structure, heterotetramer of 2 PyrK and 2 PyrD type B subunits. FMN is required as a cofactor.

The protein resides in the cytoplasm. It carries out the reaction (S)-dihydroorotate + NAD(+) = orotate + NADH + H(+). It participates in pyrimidine metabolism; UMP biosynthesis via de novo pathway; orotate from (S)-dihydroorotate (NAD(+) route): step 1/1. Functionally, catalyzes the conversion of dihydroorotate to orotate with NAD(+) as electron acceptor. The sequence is that of Dihydroorotate dehydrogenase B (NAD(+)), catalytic subunit (pyrD) from Pyrococcus furiosus (strain ATCC 43587 / DSM 3638 / JCM 8422 / Vc1).